Reading from the N-terminus, the 267-residue chain is REH2-associated factor 2 (267 aa).

In terms of assembly, component of the REH2-associated complex (REH2C) composed of helicase REH2, associated factors H2F1 and H2F2, and mRNAs at various editing stages; the formation of the complex is RNA-independent. Interacts with various editing complexes including the RNA editing core (RECC) complex, the gRNA-binding (GRBC) complex (also known as the MRB1 complex) and the RNA editing mediator (REMC) complex.

The protein resides in the mitochondrion. Functionally, may play a role in mitochondrial mRNA editing by facilitating the association of the gRNA-binding (GRBC) complex with the RNA editing core (RECC) complex. However, appears to be dispensable for mRNA editing per se. This Trypanosoma brucei brucei (strain 927/4 GUTat10.1) protein is REH2-associated factor 2.